The chain runs to 133 residues: MADAFVGTWKLVDSKNFDDYMKSLGVGFATRQVASMTKPTTIIEKNGDTITIKTQSTFKNTEINFQLGIEFDEVTADDRKVKSLVTLDGGKLIHVQKWNGQETTLTRELVDGKLILTLTHGSVVSTRTYEKEA.

Alanine 2 is modified (N-acetylalanine). Threonine 8 is modified (phosphothreonine). At tyrosine 20 the chain carries Phosphotyrosine; by Tyr-kinases. A Phosphoserine modification is found at serine 23. At threonine 30 the chain carries Phosphothreonine. At serine 83 the chain carries Phosphoserine. (9Z)-octadecenoate is bound at residue 127-129 (RTY). 127-129 (RTY) provides a ligand contact to hexadecanoate. 127 to 129 (RTY) contacts octadecanoate.

It belongs to the calycin superfamily. Fatty-acid binding protein (FABP) family.

Its subcellular location is the cytoplasm. Functionally, FABPs are thought to play a role in the intracellular transport of long-chain fatty acids and their acyl-CoA esters. The chain is Fatty acid-binding protein, heart (Fabp3) from Mus musculus (Mouse).